The following is a 202-amino-acid chain: Adenylyl-sulfate kinase (202 aa).

31–38 serves as a coordination point for ATP; sequence GLSASGKS. The active-site Phosphoserine intermediate is Ser105.

Belongs to the APS kinase family.

The catalysed reaction is adenosine 5'-phosphosulfate + ATP = 3'-phosphoadenylyl sulfate + ADP + H(+). The protein operates within sulfur metabolism; hydrogen sulfide biosynthesis; sulfite from sulfate: step 2/3. Catalyzes the synthesis of activated sulfate. This chain is Adenylyl-sulfate kinase (MET14), found in Saccharomyces cerevisiae (strain ATCC 204508 / S288c) (Baker's yeast).